Here is a 638-residue protein sequence, read N- to C-terminus: Exotoxin A (638 aa).

A signal peptide spans Met-1 to Ala-25. The domain Ia (required for target cell recognition) stretch occupies residues Ala-26–Glu-277. The segment at Gly-278 to Ser-389 is II (required for translocation in target cell cytoplasm). Cys-290 and Cys-312 are oxidised to a cystine. Residues Ala-390–Gly-429 are domain Ib. Residues Gly-430–Lys-638 are III (required for ADP-ribosyl activity). NAD(+) is bound by residues His-465–Thr-467, Ser-474, Gly-479–Gln-485, and Glu-578. Residue Glu-578 is part of the active site. Residues Ile-596 to Lys-638 form a disordered region.

Post-translationally, the 8 cysteines participate in intrachain disulfide bonds.

It carries out the reaction diphthamide-[translation elongation factor 2] + NAD(+) = N-(ADP-D-ribosyl)diphthamide-[translation elongation factor 2] + nicotinamide + H(+). Its activity is regulated as follows. Inhibited by 1,8-naphthalimide (NAP) as well as a number of poly(ADP-ribose) polymerase inhibitors and other compounds. An NAD-dependent ADP-ribosyltransferase (ADPRT). Catalyzes the transfer of the ADP ribosyl moiety of oxidized NAD (NAD(+)) onto eukaryotic elongation factor 2 (eEF-2) thus arresting protein synthesis. Has an LD(50) of 65 ng/ml against the human lung epithelial cell line C38. This Pseudomonas aeruginosa (strain ATCC 15692 / DSM 22644 / CIP 104116 / JCM 14847 / LMG 12228 / 1C / PRS 101 / PAO1) protein is Exotoxin A.